Here is a 332-residue protein sequence, read N- to C-terminus: Endo-1,4-beta-xylanase (332 aa).

The N-terminal stretch at 1-21 (MLSSTTLLAILSALALTSVQA) is a signal peptide. A GH10 domain is found at 26-316 (KNSLDYLANK…KSTYYVVQQA (291 aa)). Glu-120 acts as the Proton donor in catalysis. The cysteines at positions 128 and 160 are disulfide-linked. The Nucleophile role is filled by Glu-214. The cysteines at positions 247 and 253 are disulfide-linked.

Belongs to the glycosyl hydrolase 10 (cellulase F) family.

Its subcellular location is the secreted. It catalyses the reaction Endohydrolysis of (1-&gt;4)-beta-D-xylosidic linkages in xylans.. In terms of biological role, requires at least three xylose residues for catalytic activity. Does not have activity against xylobiose. The polypeptide is Endo-1,4-beta-xylanase (Naganishia albida (Cryptococcus albidus)).